We begin with the raw amino-acid sequence, 417 residues long: NADH-quinone oxidoreductase subunit D (417 aa).

The protein belongs to the complex I 49 kDa subunit family. As to quaternary structure, NDH-1 is composed of 14 different subunits. Subunits NuoB, C, D, E, F, and G constitute the peripheral sector of the complex.

It localises to the cell inner membrane. It carries out the reaction a quinone + NADH + 5 H(+)(in) = a quinol + NAD(+) + 4 H(+)(out). Functionally, NDH-1 shuttles electrons from NADH, via FMN and iron-sulfur (Fe-S) centers, to quinones in the respiratory chain. The immediate electron acceptor for the enzyme in this species is believed to be ubiquinone. Couples the redox reaction to proton translocation (for every two electrons transferred, four hydrogen ions are translocated across the cytoplasmic membrane), and thus conserves the redox energy in a proton gradient. The protein is NADH-quinone oxidoreductase subunit D of Burkholderia cenocepacia (strain HI2424).